Reading from the N-terminus, the 228-residue chain is Cytidylate kinase (228 aa).

17-25 (GPTASGKGT) contributes to the ATP binding site.

It belongs to the cytidylate kinase family. Type 1 subfamily.

The protein localises to the cytoplasm. It carries out the reaction CMP + ATP = CDP + ADP. It catalyses the reaction dCMP + ATP = dCDP + ADP. This Burkholderia thailandensis (strain ATCC 700388 / DSM 13276 / CCUG 48851 / CIP 106301 / E264) protein is Cytidylate kinase.